The sequence spans 348 residues: Uroporphyrinogen decarboxylase (348 aa).

Substrate contacts are provided by residues 28-32 (RQAGR), aspartate 78, tyrosine 154, threonine 209, and histidine 325.

This sequence belongs to the uroporphyrinogen decarboxylase family. In terms of assembly, homodimer.

The protein resides in the cytoplasm. The catalysed reaction is uroporphyrinogen III + 4 H(+) = coproporphyrinogen III + 4 CO2. The protein operates within porphyrin-containing compound metabolism; protoporphyrin-IX biosynthesis; coproporphyrinogen-III from 5-aminolevulinate: step 4/4. In terms of biological role, catalyzes the decarboxylation of four acetate groups of uroporphyrinogen-III to yield coproporphyrinogen-III. The protein is Uroporphyrinogen decarboxylase of Rhodopseudomonas palustris (strain BisA53).